The following is a 439-amino-acid chain: Ribosomal protein uS12 methylthiotransferase RimO (439 aa).

An MTTase N-terminal domain is found at 2–114; sequence SKLYLMSLGC…IDEMILKKTN (113 aa). [4Fe-4S] cluster is bound by residues Cys11, Cys45, Cys77, Cys146, Cys150, and Cys153. In terms of domain architecture, Radical SAM core spans 132-363; the sequence is TGSNSHAFIK…VDEVIEKSFE (232 aa).

Belongs to the methylthiotransferase family. RimO subfamily. Requires [4Fe-4S] cluster as cofactor.

The protein localises to the cytoplasm. It catalyses the reaction L-aspartate(89)-[ribosomal protein uS12]-hydrogen + (sulfur carrier)-SH + AH2 + 2 S-adenosyl-L-methionine = 3-methylsulfanyl-L-aspartate(89)-[ribosomal protein uS12]-hydrogen + (sulfur carrier)-H + 5'-deoxyadenosine + L-methionine + A + S-adenosyl-L-homocysteine + 2 H(+). In terms of biological role, catalyzes the methylthiolation of an aspartic acid residue of ribosomal protein uS12. The protein is Ribosomal protein uS12 methylthiotransferase RimO of Campylobacter jejuni subsp. jejuni serotype O:6 (strain 81116 / NCTC 11828).